The chain runs to 310 residues: Aspartate carbamoyltransferase catalytic subunit (310 aa).

Carbamoyl phosphate contacts are provided by arginine 55 and threonine 56. Lysine 83 lines the L-aspartate pocket. Carbamoyl phosphate-binding residues include arginine 105, histidine 136, and glutamine 139. L-aspartate-binding residues include arginine 169 and arginine 223. Carbamoyl phosphate is bound by residues glycine 264 and proline 265.

The protein belongs to the aspartate/ornithine carbamoyltransferase superfamily. ATCase family. Heterododecamer (2C3:3R2) of six catalytic PyrB chains organized as two trimers (C3), and six regulatory PyrI chains organized as three dimers (R2).

The catalysed reaction is carbamoyl phosphate + L-aspartate = N-carbamoyl-L-aspartate + phosphate + H(+). The protein operates within pyrimidine metabolism; UMP biosynthesis via de novo pathway; (S)-dihydroorotate from bicarbonate: step 2/3. Functionally, catalyzes the condensation of carbamoyl phosphate and aspartate to form carbamoyl aspartate and inorganic phosphate, the committed step in the de novo pyrimidine nucleotide biosynthesis pathway. The protein is Aspartate carbamoyltransferase catalytic subunit of Saccharopolyspora erythraea (strain ATCC 11635 / DSM 40517 / JCM 4748 / NBRC 13426 / NCIMB 8594 / NRRL 2338).